The sequence spans 73 residues: U-scoloptoxin(15)-Sa1a (73 aa).

The signal sequence occupies residues 1-20 (MKFHIIFCLLAALMMTSAFA).

Belongs to the scoloptoxin-15 family. Post-translationally, contains 2 disulfide bonds. Expressed by the venom gland.

It localises to the secreted. The chain is U-scoloptoxin(15)-Sa1a from Scolopendra alternans (Florida Keys giant centipede).